A 208-amino-acid chain; its full sequence is Thiamine-phosphate synthase (208 aa).

Residues 36 to 40 and Asp68 each bind 4-amino-2-methyl-5-(diphosphooxymethyl)pyrimidine; that span reads QLRMK. Asp69 and Asp88 together coordinate Mg(2+). Thr107 contributes to the 4-amino-2-methyl-5-(diphosphooxymethyl)pyrimidine binding site. 133–135 provides a ligand contact to 2-[(2R,5Z)-2-carboxy-4-methylthiazol-5(2H)-ylidene]ethyl phosphate; that stretch reads TTT. Lys136 contacts 4-amino-2-methyl-5-(diphosphooxymethyl)pyrimidine. Gly169 is a binding site for 2-[(2R,5Z)-2-carboxy-4-methylthiazol-5(2H)-ylidene]ethyl phosphate.

It belongs to the thiamine-phosphate synthase family. It depends on Mg(2+) as a cofactor.

It catalyses the reaction 2-[(2R,5Z)-2-carboxy-4-methylthiazol-5(2H)-ylidene]ethyl phosphate + 4-amino-2-methyl-5-(diphosphooxymethyl)pyrimidine + 2 H(+) = thiamine phosphate + CO2 + diphosphate. The catalysed reaction is 2-(2-carboxy-4-methylthiazol-5-yl)ethyl phosphate + 4-amino-2-methyl-5-(diphosphooxymethyl)pyrimidine + 2 H(+) = thiamine phosphate + CO2 + diphosphate. It carries out the reaction 4-methyl-5-(2-phosphooxyethyl)-thiazole + 4-amino-2-methyl-5-(diphosphooxymethyl)pyrimidine + H(+) = thiamine phosphate + diphosphate. It participates in cofactor biosynthesis; thiamine diphosphate biosynthesis; thiamine phosphate from 4-amino-2-methyl-5-diphosphomethylpyrimidine and 4-methyl-5-(2-phosphoethyl)-thiazole: step 1/1. Functionally, condenses 4-methyl-5-(beta-hydroxyethyl)thiazole monophosphate (THZ-P) and 2-methyl-4-amino-5-hydroxymethyl pyrimidine pyrophosphate (HMP-PP) to form thiamine monophosphate (TMP). This chain is Thiamine-phosphate synthase, found in Phocaeicola vulgatus (strain ATCC 8482 / DSM 1447 / JCM 5826 / CCUG 4940 / NBRC 14291 / NCTC 11154) (Bacteroides vulgatus).